The primary structure comprises 261 residues: Ribosomal RNA small subunit methyltransferase J (261 aa).

S-adenosyl-L-methionine is bound by residues 109-110, 125-126, and aspartate 179; these read RD and ER.

The protein belongs to the methyltransferase superfamily. RsmJ family.

It localises to the cytoplasm. It carries out the reaction guanosine(1516) in 16S rRNA + S-adenosyl-L-methionine = N(2)-methylguanosine(1516) in 16S rRNA + S-adenosyl-L-homocysteine + H(+). Functionally, specifically methylates the guanosine in position 1516 of 16S rRNA. This is Ribosomal RNA small subunit methyltransferase J from Pseudomonas aeruginosa (strain UCBPP-PA14).